The chain runs to 375 residues: MDQMELFDDYLLYCVGCCNKGEIESRLSKPKGVCRMKLDKGKKITVEYVPEDNYIYIDLENAIQFIKFISKHNYFCYEIDGDYHKCKMDKYIHRYIMFVITNNMEDHIEIIFSRLLPAYKNFKGTHTTDFIKLLISGITKYNSEQLVKTIIDNYPYNDYSLLFEKVIEGNADKDLIEYTIDAYRKKLFRYIKKNKNILPKVDLEDILFQFIITNDVDMFNFVVNSFMDISNDFQELKINDKQQKKIDDLTKLFDYEKFSHSLISAAIENNSYKIISQLIDDSVGLDYFDYRSLRYIMKEEKFEVFDVVLEKVIKHDKKMINRLFLKSYHYEIPIIDSLISYGANYNKYGHTVIFLAKLNDYTEVVEFLKKIINGQ.

This sequence belongs to the mimivirus L17x/L18x family.

This is an uncharacterized protein from Acanthamoeba polyphaga mimivirus (APMV).